Here is a 232-residue protein sequence, read N- to C-terminus: Cysteine proteinase inhibitor 7 (232 aa).

The first 29 residues, 1-29, serve as a signal peptide directing secretion; that stretch reads MDMRRASMCMMLICVSLVLLSGFGQFVIC. Cystatin domains follow at residues 46 to 135 and 152 to 214; these read GGFS…KNII and FDWR…ERGN. The Secondary area of contact motif lies at 91–95; sequence QVVAG. Serine 181 bears the Phosphoserine mark.

It belongs to the cystatin family. Phytocystatin subfamily.

The protein resides in the secreted. In terms of biological role, specific inhibitor of cysteine proteinases. Probably involved in the regulation of endogenous processes and in defense against pests and pathogens. This chain is Cysteine proteinase inhibitor 7 (CYS7), found in Arabidopsis thaliana (Mouse-ear cress).